Reading from the N-terminus, the 550-residue chain is MTTEDNQRWSQVSPDLAKRPLVGVEKVLNYTEYYQNGNFQLTIALLFETSVASETLCERFPLALWSVRSKLPELGTSTVSNDQSAELDLDHALWQPIRSLEQAQQWLDDTGVIVNDGTSVQQMVDRLSNRRIEPIGKQFRVYLVCDPLYGAPGLIVNASHVLNGHRALFQGESIFKALLSPRISDATRQNPDAKAALAAIFKPEELNEALPKLPQSLNTAYADKFQPGAPEIEAGFHKVGEKLSNGAQPSIGIPRFQIPSAKPAFSLGSLDGTPMSMLNLRSRINAADNQSLKRACKKYGASVPSLVYACIVNSIDRHCGSSSSEAVLGANLAYSAHASRWMPAETFEERSPVNMAIVLGSGYLSPEELQPGQRGRNLGEAGLFALARTIRKKQDDFLDTPHIIGAMSDLGEQVSSQLAEVAERQREAGTDARVALSENSPLVCPPTLTSQGVITVKRFYTAQGASDELHLEQPADEHLEFFDICTGGRTTDASVCFAMFTHVGALTLQAHFDSHFFDAQLVRNILDDVVSQLGSAAASASLTSQDQAKL.

It belongs to the trichothecene O-acetyltransferase family.

Its pathway is secondary metabolite biosynthesis. In terms of biological role, acyl-CoA-dependent acyltransferase; part of the gene cluster that mediates the biosynthesis of mannosylerythritol lipids (MELs), surface-active substances that enhance the availability of water-insoluble substrates. Depending on the number of acetyl groups, mannosylerythritol lipids can be differentiated into MEL A (fully acetylated), MEL B and MEL C (monoacetylated at R-6 and R-4, respectively), and the fully deacetylated MEL D. The first step in the pathway is the generation of mannosylerythritol by the glycosyltransferase EMT1 which catalyzes the transfer of GDP-mannose to the C-4 atom of meso-erythritol. This reaction has to be stereospecific, since only mannosyl-D-erythritol is generated. The produced disaccharide is subsequently acylated with fatty acids of various lengths by the acyltransferases MAC1 and MAC2 at positions C-2 and C-3, repectively. The existence of MEL derivatives which carry an acetyl group at C-2 implies that at least MAC1 also accepts acetyl-CoA as a donor. The final step of MEL biosynthesis is the acetylation of the fully acylated mannosylerythritol lipids catalyzed by the acetyl-CoA-dependent acetyltransferase MAT1. MAT1 displays a relaxed regioselectivity and is able to transfer acetylgroups to both positions C-4 and C-6 of the mannosyl moiety. The chain is Acyl-CoA-dependent acyltransferase MAC2 from Pseudozyma antarctica (strain T-34) (Yeast).